The following is a 62-amino-acid chain: Sperm protamine P1 (62 aa).

Residues 1–62 (MARYRHSRSR…RYSRRRRRRY (62 aa)) are disordered.

The protein belongs to the protamine P1 family. In terms of tissue distribution, testis.

It localises to the nucleus. The protein localises to the chromosome. Its function is as follows. Protamines substitute for histones in the chromatin of sperm during the haploid phase of spermatogenesis. They compact sperm DNA into a highly condensed, stable and inactive complex. This chain is Sperm protamine P1 (PRM1), found in Dorcopsulus vanheurni (Lesser forest wallaby).